Here is a 278-residue protein sequence, read N- to C-terminus: Proteolipid protein DM beta (278 aa).

The next 4 helical transmembrane spans lie at 30–46 (LIATILLYAGVALFCGC), 84–100 (VIYGVAAAFFVYGILLM), 130–146 (FIMLTYIFMLAWLGVTA), and 213–229 (LFIVALAGAGAAVIAMV).

This sequence belongs to the myelin proteolipid protein family.

The protein resides in the membrane. The chain is Proteolipid protein DM beta from Squalus acanthias (Spiny dogfish).